Here is a 241-residue protein sequence, read N- to C-terminus: MADS-box transcription factor 57 (241 aa).

Positions 1 to 61 constitute an MADS-box domain; sequence MGRGKIVIRR…GRLYEFSSTN (61 aa). In terms of domain architecture, K-box spans 85 to 178; it reads IKIWQREAAS…LNVMSQQKLE (94 aa). The disordered stretch occupies residues 216–241; sequence LELSQSQQREGECSKTAAPELGLHLP.

Interacts with TB1. Expressed in seedling roots and shoots. Highly expressed in young leaves.

It localises to the nucleus. Functionally, transcriptional factor that targets the CArG motif 5'-C(A/T)TTAAAAAG-3' in the promoter of D14. Directly suppresses D14 expression to control the outgrowth of axillary buds. The chain is MADS-box transcription factor 57 from Oryza sativa subsp. japonica (Rice).